We begin with the raw amino-acid sequence, 215 residues long: MPSYTLHYFNHRGRAEICRMLFAAAGVQYNDRRVDCSEWTGMRNQMPCSMMPMLEIDNRHQIPQSMAIARYLAREFGFHGRNNLDMARVDFISDCFYDILDDYLRMYHDKDGRMMFQRSYDNGSSSERRMRFQETCRRILPFMERTLEMRNGGNQFFMGDQMTMADLMCYCALENPLTDDTSMLSSYPKLQALRNRVMSHMKMSPYLKSRSSTDF.

The GST N-terminal domain occupies 2-80 (PSYTLHYFNH…YLAREFGFHG (79 aa)). The GST C-terminal domain occupies 82-215 (NNLDMARVDF…YLKSRSSTDF (134 aa)).

It belongs to the GST superfamily. As to expression, lens.

S-crystallins are structural components of squids and octopi eye lens. Contains relatively little GST activity (1/1000 of that of mammalian GST enzyme). In Octopus vulgaris (Common octopus), this protein is S-crystallin 2 (OCTS2).